Reading from the N-terminus, the 417-residue chain is L-rhamnose isomerase (417 aa).

Mn(2+) contacts are provided by His-260, Asp-292, and Asp-294.

This sequence belongs to the rhamnose isomerase family. Mn(2+) serves as cofactor.

Its subcellular location is the cytoplasm. It carries out the reaction L-rhamnopyranose = L-rhamnulose. Its pathway is carbohydrate degradation; L-rhamnose degradation; glycerone phosphate from L-rhamnose: step 1/3. Its function is as follows. Catalyzes the interconversion of L-rhamnose and L-rhamnulose. This is L-rhamnose isomerase from Mannheimia succiniciproducens (strain KCTC 0769BP / MBEL55E).